The following is a 396-amino-acid chain: Phosphoglycerate kinase (396 aa).

Residues 23–25 (DFN), Arg-38, 61–64 (HMGK), Arg-122, and Arg-155 each bind substrate. ATP contacts are provided by residues Lys-206, Gly-296, Glu-327, and 353–356 (GGDS).

The protein belongs to the phosphoglycerate kinase family. As to quaternary structure, monomer.

It is found in the cytoplasm. The enzyme catalyses (2R)-3-phosphoglycerate + ATP = (2R)-3-phospho-glyceroyl phosphate + ADP. The protein operates within carbohydrate degradation; glycolysis; pyruvate from D-glyceraldehyde 3-phosphate: step 2/5. The polypeptide is Phosphoglycerate kinase (Clostridium botulinum (strain Eklund 17B / Type B)).